We begin with the raw amino-acid sequence, 430 residues long: tRNA(Ile)-lysidine synthase (430 aa).

Serine 24–serine 29 lines the ATP pocket.

The protein belongs to the tRNA(Ile)-lysidine synthase family.

Its subcellular location is the cytoplasm. It carries out the reaction cytidine(34) in tRNA(Ile2) + L-lysine + ATP = lysidine(34) in tRNA(Ile2) + AMP + diphosphate + H(+). Ligates lysine onto the cytidine present at position 34 of the AUA codon-specific tRNA(Ile) that contains the anticodon CAU, in an ATP-dependent manner. Cytidine is converted to lysidine, thus changing the amino acid specificity of the tRNA from methionine to isoleucine. This Haemophilus influenzae (strain PittEE) protein is tRNA(Ile)-lysidine synthase.